Here is a 211-residue protein sequence, read N- to C-terminus: UPF0637 protein Bsph_1379 (211 aa).

It belongs to the UPF0637 family.

In Lysinibacillus sphaericus (strain C3-41), this protein is UPF0637 protein Bsph_1379.